A 145-amino-acid polypeptide reads, in one-letter code: Cytochrome c550 (145 aa).

An N-terminal signal peptide occupies residues 1–24 (MNKNNVLRGLLVLAGLSLSSLALA). The region spanning 60 to 142 (LAVEIGASAY…AIRSYLESVH (83 aa)) is the Cytochrome c domain. Residues Cys-73, Cys-76, His-77, and Met-119 each contribute to the heme c site.

As to quaternary structure, monomer. Interacts with the quinoprotein ethanol dehydrogenase (QEDH) ExaA. Binds 1 heme group per subunit.

It is found in the periplasm. It functions in the pathway alcohol metabolism; ethanol degradation; acetate from ethanol. Its function is as follows. Is an essential component of the ethanol oxidation system that allows P.aeruginosa to grow on ethanol as the sole carbon and energy source. Is the direct electron acceptor of the quinoprotein ethanol dehydrogenase (QEDH). This is Cytochrome c550 from Pseudomonas aeruginosa (strain ATCC 15692 / DSM 22644 / CIP 104116 / JCM 14847 / LMG 12228 / 1C / PRS 101 / PAO1).